Here is a 1188-residue protein sequence, read N- to C-terminus: Integrin alpha-11 (1188 aa).

An N-terminal signal peptide occupies residues 1–22; sequence MDLPRGLVVAWALSLWPGFTDT. Residues 23–1141 are Extracellular-facing; it reads FNMDTRKPRV…ISKQEDWQVP (1119 aa). 2 FG-GAP repeats span residues 24 to 85 and 91 to 151; these read NMDT…NCTK and VTLS…FSKT. Cysteine 76 and cysteine 83 are disulfide-bonded. N-linked (GlcNAc...) asparagine glycans are attached at residues asparagine 82 and asparagine 95. 2 disulfides stabilise this stretch: cysteine 121–cysteine 139 and cysteine 129–cysteine 159. The region spanning 164–345 is the VWFA domain; sequence DIVIVLDGSN…AALKDIVDAL (182 aa). Asparagine 291, asparagine 331, asparagine 358, asparagine 449, and asparagine 462 each carry an N-linked (GlcNAc...) asparagine glycan. 5 FG-GAP repeats span residues 355–406, 411–461, 462–527, 528–586, and 590–650; these read TNKN…VIPL, LKEF…TMHN, NRSL…LFVY, NGTL…SILK, and QRIT…FEPS. The Ca(2+) site is built by aspartate 488, aspartate 490, aspartate 492, and aspartate 496. Asparagine 528 carries N-linked (GlcNAc...) asparagine glycosylation. Residues aspartate 551, asparagine 553, aspartate 555, aspartate 559, aspartate 613, asparagine 615, aspartate 617, and aspartate 621 each contribute to the Ca(2+) site. The N-linked (GlcNAc...) asparagine glycan is linked to asparagine 642. 3 disulfide bridges follow: cysteine 659–cysteine 668, cysteine 674–cysteine 729, and cysteine 781–cysteine 787. N-linked (GlcNAc...) asparagine glycosylation occurs at asparagine 694. N-linked (GlcNAc...) asparagine glycosylation occurs at asparagine 857. Cysteine 881 and cysteine 893 are joined by a disulfide. Residues asparagine 894, asparagine 973, asparagine 1031, asparagine 1039, and asparagine 1059 are each glycosylated (N-linked (GlcNAc...) asparagine). The chain crosses the membrane as a helical span at residues 1142–1164; it reads IWIIVGSTLGGLLLLALLVLALW. At 1165–1188 the chain is on the cytoplasmic side; the sequence is KLGFFRSARRRREPGLDPTPKVLE.

The protein belongs to the integrin alpha chain family. Heterodimer of an alpha and a beta subunit. Alpha-11 associates with beta-1. Interacts with RAB21. As to expression, according to PubMed:10464311, highest levels of expression in uterus and heart, intermediate levels in skeletal muscle and intermediate to low levels in pancreas, kidney and placenta. According to PubMed:10486209, also found in brain, colon, lung, small intestine, stomach, testis, salivary glands, thyroid glands and prostate. Very low levels in peripheral blood lymphocytes, fetal brain and fetal liver.

The protein resides in the membrane. Its function is as follows. Integrin alpha-11/beta-1 is a receptor for collagen. The sequence is that of Integrin alpha-11 (ITGA11) from Homo sapiens (Human).